We begin with the raw amino-acid sequence, 538 residues long: MALPYHIFLFTVLLPSFTLTAPPPCRCMTSSSPYQEFLWRTQRPGNIDAPLYRSFSKGSPTFTAHTYMPRTCYNSATLCMHANTQYWTGKMINPSCPGGLGVTVCWTYFTHTGMSDGGGVQDQAREKHVKEVISQLTQVHSTSSPYKGLDLSKLHETLRTHTRLVSLFNTTLTGLHEVSAQNPTNCWMCLPLDFRPYVSIPVPEQWNNFSTEINTTSVLVGPLVSNLEITHTSNLTCVKFSNTTDTTNSQCIRWVTPPTRIFCLPSGIFFVCGTSAYRCLNGSSESMCFLSFLVPPMTIYTEQDLYNYVVSKPRNKRVPILPFVMGAGVLGALGTGIGSITTSTQFYYKLSRELNGDMERVADSLVTLQDQLNSLAAVVLQNRRALDLLTAERGGTCLFLGEECCYYVNQSGIVTEKVKEIRDRIQRRAEELRNIGPWGLLSQWMPWILPFLGPLAAIILLLLFGPCIFNLLVNFVSSRIEAIKLQMEPKMESKTKNYRRSLDWPASPRSDVNDIKGIPPEEISTAQPLLRPNSAGSS.

Residues 1–20 form the signal peptide; it reads MALPYHIFLFTVLLPSFTLT. The Extracellular segment spans residues 31–443; it reads SSPYQEFLWR…NIGPWGLLSQ (413 aa). N-linked (GlcNAc...) asparagine glycosylation occurs at Asn-169. The short motif at 186-189 is the CXXC element; that stretch reads CWMC. 3 disulfide bridges follow: Cys-186-Cys-189, Cys-186-Cys-405, and Cys-397-Cys-404. Residues Asn-208, Asn-214, Asn-234, Asn-242, and Asn-281 are each glycosylated (N-linked (GlcNAc...) asparagine). A fusion peptide region spans residues 320–340; it reads ILPFVMGAGVLGALGTGIGSI. An immunosuppression region spans residues 380–396; the sequence is LQNRRALDLLTAERGGT. The CX6CC signature appears at 397 to 405; it reads CLFLGEECC. Asn-409 is a glycosylation site (N-linked (GlcNAc...) asparagine). The chain crosses the membrane as a helical span at residues 444 to 464; that stretch reads WMPWILPFLGPLAAIILLLLF. The tract at residues 465–484 is essential for the fusiogenic function; sequence GPCIFNLLVNFVSSRIEAIK. Topologically, residues 465–538 are cytoplasmic; sequence GPCIFNLLVN…LLRPNSAGSS (74 aa). Residues 494–538 are disordered; it reads KTKNYRRSLDWPASPRSDVNDIKGIPPEEISTAQPLLRPNSAGSS.

Belongs to the gamma type-C retroviral envelope protein family. HERV class-I W env subfamily. As to quaternary structure, the mature envelope protein (Env) consists of a trimer of SU-TM heterodimers attached probably by a labile interchain disulfide bond. Interacts with the C-type lectin CD209/DC-SIGN. Specific enzymatic cleavages in vivo yield mature proteins. Envelope glycoproteins are synthesized as an inactive precursor that is heavily N-glycosylated and processed likely by furin in the Golgi to yield the mature SU and TM proteins. The cleavage site between SU and TM requires the minimal sequence [KR]-X-[KR]-R. In terms of processing, the CXXC motif is highly conserved across a broad range of retroviral envelope proteins. It is thought to participate in the formation of a labile disulfide bond possibly with the CX6CC motif present in the transmembrane protein.

The protein localises to the cell membrane. Its subcellular location is the virion. Its function is as follows. This endogenous retroviral envelope protein has retained its original fusogenic properties and participates in trophoblast fusion and the formation of a syncytium during placenta morphogenesis. May recognize and induce fusion through binding of SLC1A4 and SLC1A5. Functionally, endogenous envelope proteins may have kept, lost or modified their original function during evolution. Retroviral envelope proteins mediate receptor recognition and membrane fusion during early infection. The surface protein (SU) mediates receptor recognition, while the transmembrane protein (TM) acts as a class I viral fusion protein. The protein may have at least 3 conformational states: pre-fusion native state, pre-hairpin intermediate state, and post-fusion hairpin state. During viral and target cell membrane fusion, the coiled coil regions (heptad repeats) assume a trimer-of-hairpins structure, positioning the fusion peptide in close proximity to the C-terminal region of the ectodomain. The formation of this structure appears to drive apposition and subsequent fusion of membranes. This chain is Syncytin-1 (ERVW-1), found in Hylobates pileatus (Pileated gibbon).